The primary structure comprises 280 residues: Fructose-1,6-bisphosphatase class 1 (280 aa).

The Mg(2+) site is built by Glu-64, Asp-83, Leu-85, and Asp-86. Substrate is bound by residues Asp-86–Ser-89, Tyr-189, and Lys-220. Glu-226 is a Mg(2+) binding site.

Belongs to the FBPase class 1 family. Homotetramer. Requires Mg(2+) as cofactor.

The protein localises to the cytoplasm. The enzyme catalyses beta-D-fructose 1,6-bisphosphate + H2O = beta-D-fructose 6-phosphate + phosphate. Its pathway is carbohydrate biosynthesis; gluconeogenesis. The polypeptide is Fructose-1,6-bisphosphatase class 1 (Campylobacter jejuni subsp. doylei (strain ATCC BAA-1458 / RM4099 / 269.97)).